The primary structure comprises 133 residues: DNA-directed RNA polymerases I, II, and III subunit rpabc2 (133 aa).

Over residues 1–32 the composition is skewed to acidic residues; it reads MADFEGGGDDGGYEEFDEGGGFEEEYVEETET. The tract at residues 1–55 is disordered; sequence MADFEGGGDDGGYEEFDEGGGFEEEYVEETETTEAYTDIIDPSADANTAEAGRIP.

It belongs to the archaeal Rpo6/eukaryotic RPB6 RNA polymerase subunit family. In terms of assembly, component of the RNA polymerase I (Pol I), RNA polymerase II (Pol II) and RNA polymerase III (Pol III) complexes consisting of at least 13, 12 and 17 subunits, respectively.

It localises to the nucleus. DNA-dependent RNA polymerases catalyze the transcription of DNA into RNA using the four ribonucleoside triphosphates as substrates. Common component of RNA polymerases I, II and III which synthesize ribosomal RNA precursors, mRNA precursors and many functional non-coding RNAs, and small RNAs, such as 5S rRNA and tRNAs, respectively. Pol II is the central component of the basal RNA polymerase II transcription machinery. Pols are composed of mobile elements that move relative to each other. In Pol II, RPB6 is part of the clamp element and together with parts of RPB1 and RPB2 forms a pocket to which the RPB4-RPB7 subcomplex binds. This chain is DNA-directed RNA polymerases I, II, and III subunit rpabc2 (polr2f), found in Dictyostelium discoideum (Social amoeba).